A 286-amino-acid polypeptide reads, in one-letter code: 4-diphosphocytidyl-2-C-methyl-D-erythritol kinase (286 aa).

Lysine 12 is a catalytic residue. 96–106 (PHGAGLGGGSA) lines the ATP pocket. Residue aspartate 138 is part of the active site.

This sequence belongs to the GHMP kinase family. IspE subfamily.

The catalysed reaction is 4-CDP-2-C-methyl-D-erythritol + ATP = 4-CDP-2-C-methyl-D-erythritol 2-phosphate + ADP + H(+). Its pathway is isoprenoid biosynthesis; isopentenyl diphosphate biosynthesis via DXP pathway; isopentenyl diphosphate from 1-deoxy-D-xylulose 5-phosphate: step 3/6. In terms of biological role, catalyzes the phosphorylation of the position 2 hydroxy group of 4-diphosphocytidyl-2C-methyl-D-erythritol. This is 4-diphosphocytidyl-2-C-methyl-D-erythritol kinase from Nitratidesulfovibrio vulgaris (strain DP4) (Desulfovibrio vulgaris).